The sequence spans 72 residues: Translation initiation factor IF-1 (72 aa).

Residues 1–72 (MAKEEMLEFP…TKGRINYRFK (72 aa)) enclose the S1-like domain.

Belongs to the IF-1 family. As to quaternary structure, component of the 30S ribosomal translation pre-initiation complex which assembles on the 30S ribosome in the order IF-2 and IF-3, IF-1 and N-formylmethionyl-tRNA(fMet); mRNA recruitment can occur at any time during PIC assembly.

It localises to the cytoplasm. Its function is as follows. One of the essential components for the initiation of protein synthesis. Stabilizes the binding of IF-2 and IF-3 on the 30S subunit to which N-formylmethionyl-tRNA(fMet) subsequently binds. Helps modulate mRNA selection, yielding the 30S pre-initiation complex (PIC). Upon addition of the 50S ribosomal subunit IF-1, IF-2 and IF-3 are released leaving the mature 70S translation initiation complex. This Jannaschia sp. (strain CCS1) protein is Translation initiation factor IF-1.